Reading from the N-terminus, the 460-residue chain is Methylenetetrahydrofolate--tRNA-(uracil-5-)-methyltransferase TrmFO (460 aa).

FAD is bound at residue 12-17 (GGGLAG).

It belongs to the MnmG family. TrmFO subfamily. It depends on FAD as a cofactor.

It is found in the cytoplasm. The enzyme catalyses uridine(54) in tRNA + (6R)-5,10-methylene-5,6,7,8-tetrahydrofolate + NADH + H(+) = 5-methyluridine(54) in tRNA + (6S)-5,6,7,8-tetrahydrofolate + NAD(+). It carries out the reaction uridine(54) in tRNA + (6R)-5,10-methylene-5,6,7,8-tetrahydrofolate + NADPH + H(+) = 5-methyluridine(54) in tRNA + (6S)-5,6,7,8-tetrahydrofolate + NADP(+). Functionally, catalyzes the folate-dependent formation of 5-methyl-uridine at position 54 (M-5-U54) in all tRNAs. The sequence is that of Methylenetetrahydrofolate--tRNA-(uracil-5-)-methyltransferase TrmFO from Crocosphaera subtropica (strain ATCC 51142 / BH68) (Cyanothece sp. (strain ATCC 51142)).